The chain runs to 381 residues: Pulmonary surfactant-associated protein B (381 aa).

A signal peptide spans 1 to 24 (MAESHLLQWLLLLLPTLCGPGTAA). A Saposin A-type domain is found at 25-65 (WTTSSLACAQGPEFWCQSLEQALQCRALGHCLQEVWGHVGA). Positions 25–200 (WTTSSLACAQ…PHTQDLSEQQ (176 aa)) are excised as a propeptide. Saposin B-type domains are found at residues 65-147 (ADDL…KSRQ), 204-281 (PLPY…SMDD), and 295-370 (RDSE…GTMS). 9 cysteine pairs are disulfide-bonded: C69-C143, C72-C137, C100-C112, C208-C277, C211-C271, C235-C246, C299-C366, C302-C360, and C325-C335. Residue N129 is glycosylated (N-linked (GlcNAc...) asparagine). Residues 280–381 (DDSAGPRSPT…PLQCIHSPDL (102 aa)) constitute a propeptide that is removed on maturation. N311 carries an N-linked (GlcNAc...) asparagine glycan.

As to quaternary structure, homodimer; disulfide-linked.

The protein resides in the secreted. The protein localises to the extracellular space. It localises to the surface film. Its function is as follows. Pulmonary surfactant-associated proteins promote alveolar stability by lowering the surface tension at the air-liquid interface in the peripheral air spaces. SP-B increases the collapse pressure of palmitic acid to nearly 70 millinewtons per meter. The sequence is that of Pulmonary surfactant-associated protein B (SFTPB) from Homo sapiens (Human).